The primary structure comprises 604 residues: Probable translation initiation factor IF-2 (604 aa).

Residues 18–232 (IRTPIVCVLG…VLIGLAQRYM (215 aa)) form the tr-type G domain. Positions 27 to 34 (GHVDHGKT) are G1. 27 to 34 (GHVDHGKT) lines the GTP pocket. Residues 52 to 56 (AITQH) are G2. A G3 region spans residues 88–91 (DTPG). Residues 88–92 (DTPGH) and 142–145 (TKLD) each bind GTP. A G4 region spans residues 142-145 (TKLD). Positions 210 to 212 (SAH) are G5.

The protein belongs to the TRAFAC class translation factor GTPase superfamily. Classic translation factor GTPase family. IF-2 subfamily.

Its function is as follows. Function in general translation initiation by promoting the binding of the formylmethionine-tRNA to ribosomes. Seems to function along with eIF-2. This chain is Probable translation initiation factor IF-2, found in Methanospirillum hungatei JF-1 (strain ATCC 27890 / DSM 864 / NBRC 100397 / JF-1).